The chain runs to 3093 residues: Intermembrane lipid transfer protein VPS13A (3093 aa).

The Chorein N-terminal domain maps to 3 to 116; that stretch reads FESVVVDVLN…LMEAKQQELK (114 aa). Residues 373 to 406 form a TPR 1 repeat; that stretch reads LTSKKPPGELLVSLEELEKTLDVLNITIARQQAE. Residue Ser-839 is modified to Phosphoserine. The FFAT signature appears at 842–848; that stretch reads EFFDAPC. Position 1416 is a phosphoserine (Ser-1416). The SHR-BD domain maps to 2209–2454; it reads VAFHSPYWMV…VFYTWADPVG (246 aa). One copy of the TPR 2 repeat lies at 2860 to 2898; the sequence is ILGLDVLGNPFGLIREFSEGVEAFFYEPYQGAIQGPEEF. The segment at 2953–3027 is required for lipid droplet localization; sequence PAGFREGITR…SSTFQGIKRA (75 aa).

It belongs to the VPS13 family. In terms of assembly, interacts (via FFAT motif) with VAPA and VAPB. Interacts with RAB7A. Interacts with XK.

It is found in the mitochondrion outer membrane. The protein resides in the endoplasmic reticulum membrane. It localises to the endosome membrane. The protein localises to the lysosome membrane. Its subcellular location is the lipid droplet. It is found in the golgi apparatus. The protein resides in the cytoplasmic vesicle. It localises to the secretory vesicle. The protein localises to the neuronal dense core vesicle. Functionally, mediates the transfer of lipids between membranes at organelle contact sites. Required for the formation or stabilization of ER-mitochondria contact sites which enable transfer of lipids between the ER and mitochondria. Negatively regulates lipid droplet size and motility. Required for efficient lysosomal protein degradation. In Macaca fascicularis (Crab-eating macaque), this protein is Intermembrane lipid transfer protein VPS13A (VPS13A).